The primary structure comprises 82 residues: MATKKAGGSSSNGRDSIGKRLGVKKFGSERVIPGDIIVRQRGTKFHPGRNVGMGSDHTIFAMKSGSVSFSVGLRGRRFVHVV.

The disordered stretch occupies residues 1–20 (MATKKAGGSSSNGRDSIGKR).

The protein belongs to the bacterial ribosomal protein bL27 family.

The protein is Large ribosomal subunit protein bL27 of Neorickettsia sennetsu (strain ATCC VR-367 / Miyayama) (Ehrlichia sennetsu).